Reading from the N-terminus, the 262-residue chain is tRNA pseudouridine synthase A (262 aa).

Aspartate 52 serves as the catalytic Nucleophile. Substrate is bound at residue tyrosine 110.

It belongs to the tRNA pseudouridine synthase TruA family. In terms of assembly, homodimer.

It catalyses the reaction uridine(38/39/40) in tRNA = pseudouridine(38/39/40) in tRNA. Its function is as follows. Formation of pseudouridine at positions 38, 39 and 40 in the anticodon stem and loop of transfer RNAs. The chain is tRNA pseudouridine synthase A from Chromobacterium violaceum (strain ATCC 12472 / DSM 30191 / JCM 1249 / CCUG 213 / NBRC 12614 / NCIMB 9131 / NCTC 9757 / MK).